The primary structure comprises 465 residues: MEKNYIFENSIYKDENENDNEDDQYYNNNSSNNDEIINEEYLIKKREKIETLFLYQNFQIVITELINLLYKLYSNNNNNNNNNSPLLSSIFNTNNEENNENPTTTTISLSNKIFESFSKCYHSCQNDTNCQCRWIMELLIQSLYEVGKPSDALKLVNRFYQDGISNTPINILILSIHLLVYLKSYNESKVIIIEALKRNRNEFKSDQYEQLIELLIFHVMFRMNEINESISLLQNDSYLSDWKKNGFIKALYEMVQIREFEEKNQRELQLKRETEKLQQQNQQQQQQQLEKQLINEQQQHQQQQELNNSSQPQQEQEQLPIKTQSNISIIKDIINESIHEILSIRDLKSLKLAINRVLFAVKRVSNSRNNNNNNNNNNNNLINTKTLKQQQQQKLNSNNKRQFGIKNVQQQQQQPYRNSQQYQQYRQNNRSILNSNNNNNNNNSSTANWGGLKQLLSNTFSFNRV.

The span at 1 to 15 (MEKNYIFENSIYKDE) shows a compositional bias: basic and acidic residues. Disordered stretches follow at residues 1–31 (MEKNYIFENSIYKDENENDNEDDQYYNNNSS) and 288–320 (QLEKQLINEQQQHQQQQELNNSSQPQQEQEQLP).

This is an uncharacterized protein from Dictyostelium discoideum (Social amoeba).